Here is an 881-residue protein sequence, read N- to C-terminus: Ribonucleoside-diphosphate reductase large subunit (881 aa).

Residues 69-160 (TIYLDHNGSI…MTNLHDNTSD (92 aa)) form the ATP-cone domain. Substrate contacts are provided by residues T271, 286-287 (SC), G315, 493-497 (NLCCE), and 675-679 (PTAST). C287 and C510 are disulfide-bonded. The Proton acceptor role is filled by N493. Residue C495 is the Cysteine radical intermediate of the active site. Residue E497 is the Proton acceptor of the active site.

This sequence belongs to the ribonucleoside diphosphate reductase large chain family. Heterotetramer composed of a homodimer of the large subunit (R1) and a homodimer of the small subunit (R2). Larger multisubunit protein complex are also active, composed of (R1)n(R2)n.

The catalysed reaction is a 2'-deoxyribonucleoside 5'-diphosphate + [thioredoxin]-disulfide + H2O = a ribonucleoside 5'-diphosphate + [thioredoxin]-dithiol. Its activity is regulated as follows. Under complex allosteric control mediated by deoxynucleoside triphosphates and ATP binding. The type of nucleotide bound at the specificity site determines substrate preference. It seems probable that ATP makes the enzyme reduce CDP and UDP, dGTP favors ADP reduction and dTTP favors GDP reduction. In terms of biological role, ribonucleoside-diphosphate reductase holoenzyme provides the precursors necessary for viral DNA synthesis. Allows virus growth in non-dividing cells. Catalyzes the biosynthesis of deoxyribonucleotides from the corresponding ribonucleotides. This Acanthamoeba polyphaga mimivirus (APMV) protein is Ribonucleoside-diphosphate reductase large subunit (RNR1).